Reading from the N-terminus, the 632-residue chain is MAU2 chromatid cohesion factor homolog (632 aa).

TPR repeat units lie at residues 453–486 (GGFY…ANAE) and 493–526 (SCSL…ASKI).

Belongs to the SCC4/mau-2 family. As to quaternary structure, interacts with Nipped-B to form the cohesin loading complex.

The protein resides in the nucleus. The protein localises to the nucleoplasm. Functionally, required for association of the cohesin complex with chromatin during interphase. Plays a role in sister chromatid cohesion and normal progression through prometaphase. In Drosophila simulans (Fruit fly), this protein is MAU2 chromatid cohesion factor homolog.